Reading from the N-terminus, the 460-residue chain is Glycine--tRNA ligase (460 aa).

Substrate is bound by residues arginine 98 and glutamate 172. ATP contacts are provided by residues 204-206 (RNE), 214-219 (FRTREF), 288-289 (EL), and 332-335 (GADR). Substrate is bound at residue 219 to 223 (FEQME). Substrate is bound at residue 328-332 (EPSLG).

It belongs to the class-II aminoacyl-tRNA synthetase family. Homodimer.

The protein localises to the cytoplasm. It catalyses the reaction tRNA(Gly) + glycine + ATP = glycyl-tRNA(Gly) + AMP + diphosphate. Its function is as follows. Catalyzes the attachment of glycine to tRNA(Gly). The sequence is that of Glycine--tRNA ligase from Geobacillus kaustophilus (strain HTA426).